The sequence spans 509 residues: Major envelope glycoprotein (509 aa).

A signal peptide spans 1-17; sequence MVRTAVLILLLVRFSEP. Residues Asn34, Asn156, Asn194, Asn351, Asn381, and Asn423 are each glycosylated (N-linked (GlcNAc...) asparagine; by host). Residue Ser479 is the site of O-palmitoyl serine; by host attachment. The chain crosses the membrane as a helical span at residues 480-502; that stretch reads FMLGHAFSFMLTVGVIIFLFCMV. N-linked (GlcNAc...) asparagine; by host glycosylation is present at Asn504.

It belongs to the baculoviridae gp64 family. In terms of processing, palmitoylated.

The protein resides in the virion membrane. The protein localises to the host cell membrane. Envelope phosphoglycoprotein which mediates the fusion of viral and host endosomal membranes leading to virus entry into the host cell. The sequence is that of Major envelope glycoprotein (GP67) from Choristoneura fumiferana nuclear polyhedrosis virus (CfMNPV).